The primary structure comprises 418 residues: Glutamyl-tRNA reductase (418 aa).

Substrate is bound by residues 49-52, S105, 110-112, and Q116; these read TCNR and EPQ. C50 functions as the Nucleophile in the catalytic mechanism. 185 to 190 provides a ligand contact to NADP(+); the sequence is GAGEMI.

It belongs to the glutamyl-tRNA reductase family. As to quaternary structure, homodimer.

It catalyses the reaction (S)-4-amino-5-oxopentanoate + tRNA(Glu) + NADP(+) = L-glutamyl-tRNA(Glu) + NADPH + H(+). The protein operates within porphyrin-containing compound metabolism; protoporphyrin-IX biosynthesis; 5-aminolevulinate from L-glutamyl-tRNA(Glu): step 1/2. Functionally, catalyzes the NADPH-dependent reduction of glutamyl-tRNA(Glu) to glutamate 1-semialdehyde (GSA). This chain is Glutamyl-tRNA reductase, found in Aromatoleum aromaticum (strain DSM 19018 / LMG 30748 / EbN1) (Azoarcus sp. (strain EbN1)).